The sequence spans 342 residues: Heat-inducible transcription repressor HrcA (342 aa).

The protein belongs to the HrcA family.

Its function is as follows. Negative regulator of class I heat shock genes (grpE-dnaK-dnaJ and groELS operons). Prevents heat-shock induction of these operons. This Geobacter sulfurreducens (strain ATCC 51573 / DSM 12127 / PCA) protein is Heat-inducible transcription repressor HrcA.